Reading from the N-terminus, the 357-residue chain is Peptide chain release factor 1 (357 aa).

An N5-methylglutamine modification is found at Q233.

The protein belongs to the prokaryotic/mitochondrial release factor family. Methylated by PrmC. Methylation increases the termination efficiency of RF1.

It is found in the cytoplasm. In terms of biological role, peptide chain release factor 1 directs the termination of translation in response to the peptide chain termination codons UAG and UAA. This chain is Peptide chain release factor 1, found in Syntrophus aciditrophicus (strain SB).